Reading from the N-terminus, the 434-residue chain is Enolase (434 aa).

A41 contributes to the phosphoenolpyruvate binding site. Q165 serves as a coordination point for (2R)-2-phosphoglycerate. The active-site Proton donor is the E207. The Mg(2+) site is built by D244, E291, and D318. Phosphoenolpyruvate contacts are provided by K343, R372, S373, and K394. 4 residues coordinate (2R)-2-phosphoglycerate: K343, R372, S373, and K394. The active-site Proton acceptor is K343.

Belongs to the enolase family. As to quaternary structure, homodimer and homooctamer; the homodimer is inactive. The cofactor is Mg(2+).

The protein resides in the cytoplasm. It is found in the secreted. It localises to the cell surface. The enzyme catalyses (2R)-2-phosphoglycerate = phosphoenolpyruvate + H2O. It participates in carbohydrate degradation; glycolysis; pyruvate from D-glyceraldehyde 3-phosphate: step 4/5. In terms of biological role, catalyzes the reversible conversion of 2-phosphoglycerate (2-PG) into phosphoenolpyruvate (PEP). It is essential for the degradation of carbohydrates via glycolysis. 'Moonlights' as a laminin receptor. Binds laminin when expressed on the bacterial cell surface; this probably induces destruction of the extracellular matrix, favoring invasion and dissemination. The sequence is that of Enolase from Staphylococcus aureus.